The following is a 2173-amino-acid chain: Mediator of DNA damage checkpoint protein 1 (2173 aa).

Residues 1–19 (MEDTQAIDWDVEEEEETEQ) are compositionally biased toward acidic residues. Residues 1 to 22 (MEDTQAIDWDVEEEEETEQSSE) are disordered. The segment at 1–150 (MEDTQAIDWD…SRGPLTVEET (150 aa)) is interaction with CHEK2. The interaction with the MRN complex stretch occupies residues 2–222 (EDTQAIDWDV…PFAFNLNSDT (221 aa)). Position 4 is a phosphothreonine (threonine 4). The region spanning 54 to 105 (NVVGRMPDCSVALPFPSISKQHAEIEILAWDKAPILRDCGSLNGTQILRPPK) is the FHA domain. Position 108 is a phosphoserine (serine 108). A required for nuclear localization (NLS1) region spans residues 145-570 (LTVEETPRVQ…PAKLLVVSLE (426 aa)). A Phosphothreonine modification is found at threonine 146. 4 positions are modified to phosphoserine: serine 168, serine 176, serine 198, and serine 220. The interval 198-320 (SDEEGHSPVL…PPGRPAEVHL (123 aa)) is disordered. Residue threonine 222 is modified to Phosphothreonine. The span at 227 to 244 (GQQSATEEASSAARRGAT) shows a compositional bias: low complexity. The span at 259–276 (QLEKDQPSVKERDNDTKV) shows a compositional bias: basic and acidic residues. Position 301 is a phosphoserine (serine 301). At threonine 303 the chain carries Phosphothreonine. Basic and acidic residues predominate over residues 308 to 320 (DSRPPGRPAEVHL). The residue at position 331 (serine 331) is a Phosphoserine. Position 333 is a phosphothreonine (threonine 333). The tract at residues 359 to 383 (GTRGPGAPGLSHLQESQAGSDTDVE) is disordered. A phosphoserine mark is found at serine 374 and serine 378. Threonine 380 is subject to Phosphothreonine. Residues serine 396, serine 399, and serine 404 each carry the phosphoserine modification. Threonine 406 carries the phosphothreonine modification. Serine 413 bears the Phosphoserine mark. The interval 444–515 (LQRSQTTTGR…SSPGIHLERS (72 aa)) is disordered. At threonine 451 the chain carries Phosphothreonine. Serine 455 carries the post-translational modification Phosphoserine. A Phosphothreonine modification is found at threonine 457. 6 positions are modified to phosphoserine: serine 487, serine 497, serine 500, serine 506, serine 507, and serine 515. Phosphothreonine is present on threonine 525. Serine 592 carries the phosphoserine modification. A Glycyl lysine isopeptide (Lys-Gly) (interchain with G-Cter in SUMO1); alternate cross-link involves residue lysine 618. Lysine 618 participates in a covalent cross-link: Glycyl lysine isopeptide (Lys-Gly) (interchain with G-Cter in SUMO2); alternate. Residue serine 631 is modified to Phosphoserine. Disordered regions lie at residues 652-697 (VDTD…EDPD) and 773-1770 (HLEA…TLRS). The span at 673-687 (GREREQHVGRTKDSE) shows a compositional bias: basic and acidic residues. Residues 688–697 (DNCDDSEDPD) show a composition bias toward acidic residues. Residues serine 782 and serine 795 each carry the phosphoserine modification. Lysine 814 carries the N6-acetyllysine modification. 4 stretches are compositionally biased toward basic and acidic residues: residues 821 to 846 (ETAE…ERQT), 853 to 864 (ELTRGIQDREQK), 870 to 903 (DTQR…KEIQ), and 916 to 953 (AFER…RGEP). Serine 957, serine 1000, serine 1035, serine 1070, and serine 1088 each carry phosphoserine. Over residues 957 to 969 (SQDQKGQASSPTS) the composition is skewed to polar residues. A compositionally biased stretch (basic and acidic residues) spans 1079 to 1090 (TIRKTGQDRSQE). Basic residues predominate over residues 1105-1115 (PKPKIITRKSS). Polar residues predominate over residues 1131 to 1156 (PSTSTAQPVTPKPTSQATRSRTNRSS). An interaction with the PRKDC complex region spans residues 1150–1694 (SRTNRSSVKT…KNRSSVKTPE (545 aa)). The segment covering 1157-1169 (VKTPEPVVPTVPE) has biased composition (low complexity). Threonine 1159 carries the phosphothreonine modification. Positions 1171–1189 (QPSTSTDQPVASEPTSQAT) are enriched in polar residues. Phosphothreonine is present on threonine 1200. The residue at position 1237 (serine 1237) is a Phosphoserine. Phosphothreonine is present on residues threonine 1241, threonine 1282, and threonine 1304. The span at 1280 to 1292 (VKTPEPVVPTVPE) shows a compositional bias: low complexity. Residues 1294–1320 (QPSTSTDQPVTSEPTSQATRGRTNRSS) show a composition bias toward polar residues. The segment covering 1321–1333 (VKTPEPVVPTVPE) has biased composition (low complexity). Positions 1335 to 1353 (QPSTSTDQPVASEPTSQAT) are enriched in polar residues. The span at 1390-1402 (TSRTTRSRTNMSS) shows a compositional bias: low complexity. 4 stretches are compositionally biased toward polar residues: residues 1418 to 1434 (PSTS…TYQP), 1456 to 1487 (KLQS…SVKS), 1499 to 1527 (QPST…SSVK), and 1540 to 1559 (QPST…QATR). 2 positions are modified to phosphoserine: serine 1483 and serine 1484. At lysine 1486 the chain carries N6-acetyllysine. Threonine 1509 and threonine 1550 each carry phosphothreonine. Positions 1567-1578 (VKTPKIVVPTVP) are enriched in low complexity. Residues 1581–1598 (QASTSTDQPVTSEPTSRT) are compositionally biased toward polar residues. Phosphothreonine is present on residues threonine 1617 and threonine 1632. Over residues 1626–1639 (STDQPITPKPTSRA) the composition is skewed to polar residues. Residue serine 1648 is modified to Phosphoserine. Phosphothreonine occurs at positions 1651 and 1673. A compositionally biased stretch (polar residues) spans 1664 to 1680 (PSTSRSQLVTPEPTSRA). Residue serine 1688 is modified to Phosphoserine. Phosphothreonine occurs at positions 1692, 1714, 1748, and 1755. Positions 1705–1721 (PTTSTDQPVTPKPTSRA) are enriched in polar residues. The span at 1761–1770 (QGSQSKTLRS) shows a compositional bias: polar residues. Serine 1765 bears the Phosphoserine mark. The residue at position 1781 (threonine 1781) is a Phosphothreonine. The required for nuclear localization (NLS2) stretch occupies residues 1782-2173 (PEFQSPVTTD…VLSPLEMSST (392 aa)). 2 positions are modified to phosphoserine: serine 1786 and serine 1795. The disordered stretch occupies residues 1809–1971 (RATGNPGSLT…NRSLRRTKLN (163 aa)). Lysine 1824 participates in a covalent cross-link: Glycyl lysine isopeptide (Lys-Gly) (interchain with G-Cter in SUMO2). Residue serine 1859 is modified to Phosphoserine. Lysine 1874 is covalently cross-linked (Glycyl lysine isopeptide (Lys-Gly) (interchain with G-Cter in SUMO2)). Position 1884 is a phosphothreonine (threonine 1884). Residue serine 1904 is modified to Phosphoserine. Polar residues predominate over residues 1907 to 1920 (HQKQPQRGEVSQKT). Lysine 1924 participates in a covalent cross-link: Glycyl lysine isopeptide (Lys-Gly) (interchain with G-Cter in SUMO1); alternate. A Glycyl lysine isopeptide (Lys-Gly) (interchain with G-Cter in SUMO2); alternate cross-link involves residue lysine 1924. Positions 1931–1941 (AEKPGKEEDVM) are enriched in basic and acidic residues. Threonine 1942 is subject to Phosphothreonine. BRCT domains lie at 1976 to 2054 (APKV…EYVV) and 2075 to 2166 (RERR…FVLS). Arginine 2027 is subject to Omega-N-methylarginine.

As to quaternary structure, homodimer. Interacts with H2AX, which requires phosphorylation of H2AX on 'Ser-139'. Interacts with the MRN complex, composed of MRE11, RAD50, and NBN. Interacts with CHEK2, which requires ATM-mediated phosphorylation of 'Thr-68' within the FHA domain of CHEK2. Interacts constitutively with the BRCA1-BARD1 complex, SMC1A and TP53BP1. Interacts with ATM and FANCD2, and these interactions are reduced upon DNA damage. Also interacts with the PRKDC complex, composed of XRCC6/KU70, XRCC5/KU80 and PRKDC/XRCC7. This interaction may be required for PRKDC autophosphorylation, which is essential for DNA double strand break (DSB) repair. When phosphorylated by ATM, interacts with RNF8 (via FHA domain). Interacts with CEP164. When phosphorylated, interacts with APTX (via FHA-like domain). Interacts (when phosphorylated) with TOPBP1; promoting TOPBP1 localization to DNA damage sites during mitosis. Interacts (when phosphorylated) with NBN; promoting NBN and MRN complex localization to DNA damage sites. Phosphorylated upon exposure to ionizing radiation (IR), ultraviolet radiation (UV), and hydroxyurea (HU). Phosphorylation in response to IR requires ATM, NBN, and possibly CHEK2. Also phosphorylated during the G2/M phase of the cell cycle and during activation of the mitotic spindle checkpoint. Phosphorylation at Thr-4 by ATM stabilizes and enhances homodimerization via the FHA domain. Phosphorylated at Ser-168 and Ser-198 by CK2 in response to DNA damage during mitosis, promoting interaction with TOPBP1. Phosphorylated by CK2 in response to DNA damage, promoting interaction with NBN and recruitment of the MRN complex to DNA damage sites. Post-translationally, sumoylation at Lys-1924 by PIAS4 following DNA damage promotes ubiquitin-mediated degradation. In terms of processing, ubiquitinated by RNF4, leading to proteasomal degradation; undergoes 'Lys-48'-linked polyubiquitination.

The protein resides in the nucleus. It localises to the chromosome. Functionally, histone reader protein required for checkpoint-mediated cell cycle arrest in response to DNA damage within both the S phase and G2/M phases of the cell cycle. Specifically recognizes and binds histone H2AX phosphorylated at 'Ser-139', a marker of DNA damage, serving as a scaffold for the recruitment of DNA repair and signal transduction proteins to discrete foci of DNA damage sites. Also required for downstream events subsequent to the recruitment of these proteins. These include phosphorylation and activation of the ATM, CHEK1 and CHEK2 kinases, and stabilization of TP53/p53 and apoptosis. ATM and CHEK2 may also be activated independently by a parallel pathway mediated by TP53BP1. Required for chromosomal stability during mitosis by promoting recruitment of TOPBP1 to DNA double strand breaks (DSBs): TOPBP1 forms filamentous assemblies that bridge MDC1 and tether broken chromosomes during mitosis. Required for the repair of DSBs via homologous recombination by promoting recruitment of NBN component of the MRN complex to DSBs. The polypeptide is Mediator of DNA damage checkpoint protein 1 (MDC1) (Macaca mulatta (Rhesus macaque)).